A 474-amino-acid polypeptide reads, in one-letter code: 6-phospho-beta-galactosidase (474 aa).

The D-galactose 6-phosphate site is built by Q19, H116, N159, E160, and N297. E160 functions as the Proton donor in the catalytic mechanism. Residue E375 is the Nucleophile of the active site. Residues S433, W434, K440, and Y442 each coordinate D-galactose 6-phosphate.

It belongs to the glycosyl hydrolase 1 family.

The enzyme catalyses a 6-phospho-beta-D-galactoside + H2O = D-galactose 6-phosphate + an alcohol. It functions in the pathway carbohydrate metabolism; lactose degradation; D-galactose 6-phosphate and beta-D-glucose from lactose 6-phosphate: step 1/1. The sequence is that of 6-phospho-beta-galactosidase from Lacticaseibacillus casei (Lactobacillus casei).